The sequence spans 412 residues: Multifunctional CCA protein (412 aa).

Positions 8 and 11 each coordinate ATP. The CTP site is built by Gly8 and Arg11. Mg(2+) is bound by residues Asp21 and Asp23. 3 residues coordinate ATP: Arg91, Arg137, and Arg140. CTP is bound by residues Arg91, Arg137, and Arg140. The HD domain occupies 228–329; sequence TGIHTLMTLS…VKLFDSIDAW (102 aa).

The protein belongs to the tRNA nucleotidyltransferase/poly(A) polymerase family. Bacterial CCA-adding enzyme type 1 subfamily. In terms of assembly, monomer. Can also form homodimers and oligomers. Mg(2+) serves as cofactor. Requires Ni(2+) as cofactor.

It catalyses the reaction a tRNA precursor + 2 CTP + ATP = a tRNA with a 3' CCA end + 3 diphosphate. It carries out the reaction a tRNA with a 3' CCA end + 2 CTP + ATP = a tRNA with a 3' CCACCA end + 3 diphosphate. Catalyzes the addition and repair of the essential 3'-terminal CCA sequence in tRNAs without using a nucleic acid template. Adds these three nucleotides in the order of C, C, and A to the tRNA nucleotide-73, using CTP and ATP as substrates and producing inorganic pyrophosphate. tRNA 3'-terminal CCA addition is required both for tRNA processing and repair. Also involved in tRNA surveillance by mediating tandem CCA addition to generate a CCACCA at the 3' terminus of unstable tRNAs. While stable tRNAs receive only 3'-terminal CCA, unstable tRNAs are marked with CCACCA and rapidly degraded. This is Multifunctional CCA protein from Escherichia coli (strain SE11).